Here is a 397-residue protein sequence, read N- to C-terminus: Enoyl-[acyl-carrier-protein] reductase [NADH] (397 aa).

NAD(+)-binding positions include 48 to 53, 74 to 75, 111 to 112, and 139 to 140; these read GASTGY, FE, DA, and VA. Position 225 (Tyr225) interacts with substrate. Tyr235 acts as the Proton donor in catalysis. Residues Lys244 and 273–275 contribute to the NAD(+) site; that span reads VVT.

Belongs to the TER reductase family. Monomer.

It carries out the reaction a 2,3-saturated acyl-[ACP] + NAD(+) = a (2E)-enoyl-[ACP] + NADH + H(+). It functions in the pathway lipid metabolism; fatty acid biosynthesis. Functionally, involved in the final reduction of the elongation cycle of fatty acid synthesis (FAS II). Catalyzes the reduction of a carbon-carbon double bond in an enoyl moiety that is covalently linked to an acyl carrier protein (ACP). The polypeptide is Enoyl-[acyl-carrier-protein] reductase [NADH] (Burkholderia mallei (strain SAVP1)).